We begin with the raw amino-acid sequence, 165 residues long: Growth arrest and DNA damage-inducible protein GADD45 alpha (165 aa).

Position 2 is a phosphothreonine (Thr-2).

Belongs to the GADD45 family. In terms of assembly, interacts with AURKA, GADD45GIP1 and PCNA. Interacts with MAPK14.

The protein resides in the nucleus. Its function is as follows. Might affect PCNA interaction with some CDK (cell division protein kinase) complexes; stimulates DNA excision repair in vitro and inhibits entry of cells into S phase. In T-cells, functions as a regulator of p38 MAPKs by inhibiting p88 phosphorylation and activity. The chain is Growth arrest and DNA damage-inducible protein GADD45 alpha (Gadd45a) from Mus musculus (Mouse).